An 83-amino-acid polypeptide reads, in one-letter code: Small ribosomal subunit protein uS19m (83 aa).

Belongs to the universal ribosomal protein uS19 family.

It is found in the mitochondrion. The sequence is that of Small ribosomal subunit protein uS19m (RPS19) from Tetraselmis subcordiformis (Marine green alga).